Reading from the N-terminus, the 131-residue chain is Type-5 thionin (131 aa).

The first 29 residues, 1–29, serve as a signal peptide directing secretion; it reads MGGGQKGLESAIVCLLVLGLVLEQVQVEG. Positions 67 to 131 are cleaved as a propeptide — acidic domain; the sequence is LASVRSSDEP…GDTLLASLDD (65 aa).

This sequence belongs to the plant thionin (TC 1.C.44) family. In terms of processing, is disulfide-linked. Developing endosperm.

It localises to the secreted. Its function is as follows. Thionins are small plant proteins which are toxic to animal cells. They seem to exert their toxic effect at the level of the cell membrane. Their precise function is not known. The chain is Type-5 thionin (TTHV) from Triticum aestivum (Wheat).